Here is a 1162-residue protein sequence, read N- to C-terminus: Paired amphipathic helix protein Sin3-like 5 (1162 aa).

A disordered region spans residues 1 to 37 (MKRVREEVYVEPQMRGPTVSSRGETNGRPSTISGGGT). Positions 18 to 30 (TVSSRGETNGRPS) are enriched in polar residues. 2 PAH domains span residues 28–109 (RPST…LPKG) and 123–193 (KPVD…LPDF). 4 disordered regions span residues 702–727 (RVSD…ESCE), 743–779 (QKLP…DDDN), 803–830 (GGQV…SNEG), and 1121–1143 (KKAT…ELSR). Ser817 carries the phosphoserine modification. The segment covering 1123–1139 (ATLNPTGPENVKTSDSS) has biased composition (polar residues).

It is found in the nucleus. Acts as a transcriptional repressor. Plays roles in regulating gene expression and genome stability. This is Paired amphipathic helix protein Sin3-like 5 (SNL5) from Arabidopsis thaliana (Mouse-ear cress).